The following is a 156-amino-acid chain: Homeobox-leucine zipper protein ATHB-52 (156 aa).

Positions 8–67 (GKNKKKRLTQDQVRQLEKCFTMNKKLEPDLKLQLSNQLGLPQRQVAVWFQNKRARFKTQS) form a DNA-binding region, homeobox. The segment at 68–96 (LEVQHCTLQSKHEAALSDKAKLEHQVQFL) is leucine-zipper.

Belongs to the HD-ZIP homeobox family. Class I subfamily. Expressed in roots and flowers.

It is found in the nucleus. In terms of biological role, probable transcription factor. In Arabidopsis thaliana (Mouse-ear cress), this protein is Homeobox-leucine zipper protein ATHB-52 (ATHB-52).